The primary structure comprises 199 residues: uncharacterized protein (199 aa).

Positions 1–23 are cleaved as a signal peptide; it reads MSARAPKELRLALPPCLLNRTFA. N-linked (GlcNAc...) asparagine glycans are attached at residues asparagine 19 and asparagine 26. The Extracellular portion of the chain corresponds to 24–60; sequence SHNASGGSSAGLRSSGAGGGTCITQVGQQLFQSFSST. A helical membrane pass occupies residues 61-81; sequence LVLIVLVTLIFCLLVLSLSTF. Over 82–199 the chain is Cytoplasmic; the sequence is HIHKRRMKKR…EGLLQTVVLS (118 aa). The disordered stretch occupies residues 93–190; that stretch reads MQRAQEEYER…ASSCLDTPGE (98 aa). 2 stretches are compositionally biased toward basic and acidic residues: residues 95–106 and 124–135; these read RAQEEYERDHCS and HGKETRLERQPR. Positions 147-163 are enriched in low complexity; sequence SSSSSSSSSPGLLCQGP. A compositionally biased stretch (pro residues) spans 164–176; the sequence is CAPPPPLPAPTPQ.

It is found in the membrane. This is an uncharacterized protein from Mus musculus (Mouse).